A 738-amino-acid chain; its full sequence is 1,4-alpha-glucan branching enzyme GlgB (738 aa).

Asp399 serves as the catalytic Nucleophile. Residue Glu452 is the Proton donor of the active site.

It belongs to the glycosyl hydrolase 13 family. GlgB subfamily. Monomer.

It carries out the reaction Transfers a segment of a (1-&gt;4)-alpha-D-glucan chain to a primary hydroxy group in a similar glucan chain.. Its pathway is glycan biosynthesis; glycogen biosynthesis. Its function is as follows. Catalyzes the formation of the alpha-1,6-glucosidic linkages in glycogen by scission of a 1,4-alpha-linked oligosaccharide from growing alpha-1,4-glucan chains and the subsequent attachment of the oligosaccharide to the alpha-1,6 position. In Chlamydia trachomatis serovar D (strain ATCC VR-885 / DSM 19411 / UW-3/Cx), this protein is 1,4-alpha-glucan branching enzyme GlgB.